The primary structure comprises 346 residues: Hydroxyproline O-galactosyltransferase HPGT3 (346 aa).

Over residues 1–10 (MESLPTTVPS) the composition is skewed to polar residues. A disordered region spans residues 1-21 (MESLPTTVPSKSERRARSSKF). The Cytoplasmic portion of the chain corresponds to 1–28 (MESLPTTVPSKSERRARSSKFSQSSSKP). The helical; Signal-anchor for type II membrane protein transmembrane segment at 29–45 (SVIMAFFSCVAWLYVAG) threads the bilayer. The Lumenal portion of the chain corresponds to 46–346 (RLWQDAENRV…IRQDKVCSVA (301 aa)).

Belongs to the glycosyltransferase 31 family. Requires Mn(2+) as cofactor. As to expression, expressed in roots, rosette leaves, cauline leaves, stems, flowers and siliques.

It is found in the golgi apparatus membrane. It participates in protein modification; protein glycosylation. In terms of biological role, possesses hydroxyproline O-galactosyltransferase activity. Transfers galactose from UDP-galactose to hydroxyproline residues in the arabinogalactan proteins (AGPs). Is specific for AGPs containing non-contiguous peptidyl hydroxyproline residues. The addition of galactose onto the peptidyl hydroxyproline residues in AGP core proteins represents the first committed step in arabinogalactan polysaccharide addition. AGP glycans play essential roles in both vegetative and reproductive plant growth. In Arabidopsis thaliana (Mouse-ear cress), this protein is Hydroxyproline O-galactosyltransferase HPGT3.